Consider the following 264-residue polypeptide: Catechol O-methyltransferase B (264 aa).

An N-terminal signal peptide occupies residues 1–29 (MLGVLLCWCLGASVLLYVLYSWLIPAAVQ). N-linked (GlcNAc...) asparagine glycosylation occurs at Asn-31. Residues Val-92, Ser-122, Glu-140, and Asp-191 each coordinate S-adenosyl-L-methionine. Asp-191 is a binding site for Mg(2+). Substrate is bound at residue Lys-194. The Mg(2+) site is built by Asp-219 and Asn-220. The substrate site is built by Asn-220 and Glu-249.

Belongs to the class I-like SAM-binding methyltransferase superfamily. Cation-dependent O-methyltransferase family. Requires Mg(2+) as cofactor. Strongly expressed in eye, diencephalon, spinal cord, hindbrain, liver, kidney and telencephalon. Also detected at very low levels in muscle, spleen, anterior gut and heart. In eye, expressed strongly in retina. In brain, expressed in the central part of the telencephalon, the periventricular gray zone of the optic tectum, the periglomerular nucleus, the olfactory bulb, and the region adjacent to the diencephalic ventricle in the hypothalamus. Expressed in gill, with strongest expression in gill filaments nearest the gill arch, and in esophageal epithelium.

The protein localises to the secreted. It carries out the reaction a catechol + S-adenosyl-L-methionine = a guaiacol + S-adenosyl-L-homocysteine + H(+). Functionally, catalyzes the O-methylation, and thereby the inactivation, of catecholamine neurotransmitters and catechol hormones. The polypeptide is Catechol O-methyltransferase B (Danio rerio (Zebrafish)).